Here is a 304-residue protein sequence, read N- to C-terminus: MMTEQLLAGLYEGIAKEAVLINEPLKNHTYTKMGGLADLFLIPSTYEETAFAVRYAYEHDLPLTMLGNGSNLVVRDGGIRGIVLSFEKLTDISVEGHELIAQSGAAIIQASRIAYDHALSGLEFACGIPGTIGGALIMNAGAYGGEVKDCLHSATVLTRKGELLNISHEELELGYRTSCFSKKEYIILEGRFSLTEGDPALIKEMMDDLTHKRETKQPLEYPSCGSVFKRPEGYFAGKLIQDSGLQGARIGGAEVSQKHAGFIVNIKDATATDYISLIRHVQETVQEKFGILLEPEVKIIGEEA.

The FAD-binding PCMH-type domain occupies 33–212 (MGGLADLFLI…KEMMDDLTHK (180 aa)). The active site involves Arg176. Ser226 serves as the catalytic Proton donor. The active site involves Glu296.

The protein belongs to the MurB family. FAD is required as a cofactor.

The protein localises to the cytoplasm. It catalyses the reaction UDP-N-acetyl-alpha-D-muramate + NADP(+) = UDP-N-acetyl-3-O-(1-carboxyvinyl)-alpha-D-glucosamine + NADPH + H(+). It participates in cell wall biogenesis; peptidoglycan biosynthesis. Its function is as follows. Cell wall formation. The sequence is that of UDP-N-acetylenolpyruvoylglucosamine reductase from Exiguobacterium sibiricum (strain DSM 17290 / CCUG 55495 / CIP 109462 / JCM 13490 / 255-15).